We begin with the raw amino-acid sequence, 281 residues long: Urease accessory protein UreD (281 aa).

It belongs to the UreD family. UreD, UreF and UreG form a complex that acts as a GTP-hydrolysis-dependent molecular chaperone, activating the urease apoprotein by helping to assemble the nickel containing metallocenter of UreC. The UreE protein probably delivers the nickel.

It localises to the cytoplasm. In terms of biological role, required for maturation of urease via the functional incorporation of the urease nickel metallocenter. This chain is Urease accessory protein UreD, found in Pseudomonas savastanoi pv. phaseolicola (strain 1448A / Race 6) (Pseudomonas syringae pv. phaseolicola (strain 1448A / Race 6)).